The sequence spans 134 residues: Small ribosomal subunit protein uS11 (134 aa).

Belongs to the universal ribosomal protein uS11 family. In terms of assembly, part of the 30S ribosomal subunit. Interacts with proteins S7 and S18. Binds to IF-3.

Its function is as follows. Located on the platform of the 30S subunit, it bridges several disparate RNA helices of the 16S rRNA. Forms part of the Shine-Dalgarno cleft in the 70S ribosome. This chain is Small ribosomal subunit protein uS11, found in Parafrankia sp. (strain EAN1pec).